Reading from the N-terminus, the 705-residue chain is Lethal(3)malignant brain tumor-like protein 2 (705 aa).

Residues 1–84 are disordered; it reads MEKPPSIEET…GTPRSLDGSG (84 aa). Position 13 is a phosphoserine (serine 13). Residues 15–25 show a composition bias toward acidic residues; sequence PMEEEEDDDLE. The segment covering 38 to 49 has biased composition (low complexity); that stretch reads SSVGSESSSYLE. Residues 50–60 are compositionally biased toward acidic residues; it reads ESSEAENEDRE. Position 67 is a phosphoserine (serine 67). Phosphothreonine is present on threonine 76. The FCS-type zinc-finger motif lies at 81–116; it reads DGSGSEPAVCEMCGIVGTREAFFSKTKRFCSVSCSR. Zn(2+)-binding residues include cysteine 90, cysteine 93, cysteine 110, and cysteine 114. MBT repeat units follow at residues 179-283, 291-391, 397-500, and 508-604; these read FDWG…LVPP, TDWK…IKMS, MAHH…LTPP, and FNWE…LQPP. A Phosphoserine modification is found at serine 338. Lysine 405 participates in a covalent cross-link: Glycyl lysine isopeptide (Lys-Gly) (interchain with G-Cter in SUMO2). A disordered region spans residues 608–705; the sequence is EPATPLKAKE…VENIKQETDD (98 aa). Residues 619 to 634 are compositionally biased toward basic residues; the sequence is TKKKKKQFGKKRKRIP. Glycyl lysine isopeptide (Lys-Gly) (interchain with G-Cter in SUMO2) cross-links involve residues lysine 647, lysine 659, and lysine 675. Phosphoserine occurs at positions 683, 688, and 689. A Glycyl lysine isopeptide (Lys-Gly) (interchain with G-Cter in SUMO1); alternate cross-link involves residue lysine 700. A Glycyl lysine isopeptide (Lys-Gly) (interchain with G-Cter in SUMO2); alternate cross-link involves residue lysine 700.

Part of the E2F6.com-1 complex in G0 phase composed of E2F6, MGA, MAX, TFDP1, CBX3, BAT8, EUHMTASE1, RING1, RNF2, MBLR, BAT8 and YAF2.

It is found in the nucleus. Its function is as follows. Putative Polycomb group (PcG) protein. PcG proteins maintain the transcriptionally repressive state of genes, probably via a modification of chromatin, rendering it heritably changed in its expressibility. Its association with a chromatin-remodeling complex suggests that it may contribute to prevent expression of genes that trigger the cell into mitosis. Binds to monomethylated and dimethylated 'Lys-20' on histone H4. Binds histone H3 peptides that are monomethylated or dimethylated on 'Lys-4', 'Lys-9' or 'Lys-27'. The sequence is that of Lethal(3)malignant brain tumor-like protein 2 (L3MBTL2) from Pongo abelii (Sumatran orangutan).